The sequence spans 401 residues: Argininosuccinate synthase (401 aa).

Position 8–16 (8–16 (AYSGGLDTS)) interacts with ATP. An L-citrulline-binding site is contributed by tyrosine 87. Glycine 117 contacts ATP. 3 residues coordinate L-aspartate: threonine 119, asparagine 123, and aspartate 124. Residue asparagine 123 participates in L-citrulline binding. Arginine 127, serine 175, glutamate 259, and tyrosine 271 together coordinate L-citrulline.

Belongs to the argininosuccinate synthase family. Type 1 subfamily. In terms of assembly, homotetramer.

It is found in the cytoplasm. The enzyme catalyses L-citrulline + L-aspartate + ATP = 2-(N(omega)-L-arginino)succinate + AMP + diphosphate + H(+). It participates in amino-acid biosynthesis; L-arginine biosynthesis; L-arginine from L-ornithine and carbamoyl phosphate: step 2/3. This Pseudarthrobacter chlorophenolicus (strain ATCC 700700 / DSM 12829 / CIP 107037 / JCM 12360 / KCTC 9906 / NCIMB 13794 / A6) (Arthrobacter chlorophenolicus) protein is Argininosuccinate synthase.